Here is a 219-residue protein sequence, read N- to C-terminus: Large ribosomal subunit protein bL31m (219 aa).

Composition is skewed to basic and acidic residues over residues 169 to 181 (KKEE…KAAE) and 210 to 219 (KETRHYGKKK). 2 disordered regions span residues 169 to 188 (KKEE…ADPF) and 200 to 219 (TENM…GKKK).

This sequence belongs to the bacterial ribosomal protein bL31 family. Highly divergent. In terms of assembly, component of the mitochondrial large ribosomal subunit (mt-LSU). Mature N.crassa 74S mitochondrial ribosomes consist of a small (37S) and a large (54S) subunit. The 37S small subunit contains a 16S ribosomal RNA (16S mt-rRNA) and 32 different proteins. The 54S large subunit contains a 23S rRNA (23S mt-rRNA) and 42 different proteins. bL31m bridges the mt-LSU central protuberance and the mt-SSU head.

It is found in the mitochondrion. Its function is as follows. Component of the mitochondrial ribosome (mitoribosome), a dedicated translation machinery responsible for the synthesis of mitochondrial genome-encoded proteins, including at least some of the essential transmembrane subunits of the mitochondrial respiratory chain. The mitoribosomes are attached to the mitochondrial inner membrane and translation products are cotranslationally integrated into the membrane. The sequence is that of Large ribosomal subunit protein bL31m (mrpl36) from Neurospora crassa (strain ATCC 24698 / 74-OR23-1A / CBS 708.71 / DSM 1257 / FGSC 987).